The chain runs to 256 residues: Small ribosomal subunit protein eS1 (256 aa).

Basic residues predominate over residues 1-18 (MAVGKNKRLSKGKKGIKK). Residues 1–20 (MAVGKNKRLSKGKKGIKKRT) are disordered. At A2 the chain carries N-acetylalanine; partial.

The protein belongs to the eukaryotic ribosomal protein eS1 family. Component of the small ribosomal subunit. Mature ribosomes consist of a small (40S) and a large (60S) subunit. The 40S subunit contains about 33 different proteins and 1 molecule of RNA (18S). The 60S subunit contains about 49 different proteins and 3 molecules of RNA (25S, 5.8S and 5S).

It is found in the cytoplasm. The polypeptide is Small ribosomal subunit protein eS1 (rps1) (Aspergillus terreus (strain NIH 2624 / FGSC A1156)).